A 215-amino-acid polypeptide reads, in one-letter code: Putative glycosyltransferase ALG1L2 (215 aa).

Residues 40 to 66 (PFRARSEPEDPDTERSAFTERDSGSGL) are disordered. The segment covering 43-62 (ARSEPEDPDTERSAFTERDS) has biased composition (basic and acidic residues).

The protein belongs to the glycosyltransferase group 1 family.

Its function is as follows. Putative glycosyltransferase. This Homo sapiens (Human) protein is Putative glycosyltransferase ALG1L2 (ALG1L2).